The primary structure comprises 333 residues: Phosphate acyltransferase (333 aa).

The protein belongs to the PlsX family. As to quaternary structure, homodimer. Probably interacts with PlsY.

It is found in the cytoplasm. It catalyses the reaction a fatty acyl-[ACP] + phosphate = an acyl phosphate + holo-[ACP]. The protein operates within lipid metabolism; phospholipid metabolism. Functionally, catalyzes the reversible formation of acyl-phosphate (acyl-PO(4)) from acyl-[acyl-carrier-protein] (acyl-ACP). This enzyme utilizes acyl-ACP as fatty acyl donor, but not acyl-CoA. This is Phosphate acyltransferase from Lactobacillus gasseri (strain ATCC 33323 / DSM 20243 / BCRC 14619 / CIP 102991 / JCM 1131 / KCTC 3163 / NCIMB 11718 / NCTC 13722 / AM63).